Consider the following 494-residue polypeptide: Probable cytosol aminopeptidase (494 aa).

Residues Lys260 and Asp265 each coordinate Mn(2+). The active site involves Lys272. 3 residues coordinate Mn(2+): Asp283, Asp342, and Glu344. The active site involves Arg346.

Belongs to the peptidase M17 family. Requires Mn(2+) as cofactor.

Its subcellular location is the cytoplasm. It catalyses the reaction Release of an N-terminal amino acid, Xaa-|-Yaa-, in which Xaa is preferably Leu, but may be other amino acids including Pro although not Arg or Lys, and Yaa may be Pro. Amino acid amides and methyl esters are also readily hydrolyzed, but rates on arylamides are exceedingly low.. The enzyme catalyses Release of an N-terminal amino acid, preferentially leucine, but not glutamic or aspartic acids.. In terms of biological role, presumably involved in the processing and regular turnover of intracellular proteins. Catalyzes the removal of unsubstituted N-terminal amino acids from various peptides. This is Probable cytosol aminopeptidase from Bacillus cereus (strain ATCC 14579 / DSM 31 / CCUG 7414 / JCM 2152 / NBRC 15305 / NCIMB 9373 / NCTC 2599 / NRRL B-3711).